We begin with the raw amino-acid sequence, 397 residues long: 3-ketoacyl-CoA thiolase, mitochondrial (397 aa).

The N-terminal 16 residues, 1 to 16 (MALLRGVFVVAAKRTP), are a transit peptide targeting the mitochondrion; not cleaved. N6-acetyllysine; alternate is present on lysine 25. At lysine 25 the chain carries N6-succinyllysine; alternate. N6-succinyllysine is present on lysine 45. Cysteine 92 functions as the Acyl-thioester intermediate in the catalytic mechanism. Threonine 119 is subject to Phosphothreonine. Serine 121 is subject to Phosphoserine. Phosphotyrosine is present on tyrosine 127. The residue at position 136 (threonine 136) is a Phosphothreonine. Lysine 137 is modified (N6-acetyllysine; alternate). Lysine 137 is subject to N6-succinyllysine; alternate. Serine 140 is subject to Phosphoserine. Residues lysine 143, lysine 171, lysine 191, and lysine 209 each carry the N6-acetyllysine; alternate modification. 4 positions are modified to N6-succinyllysine; alternate: lysine 143, lysine 171, lysine 191, and lysine 209. 3 positions are modified to N6-succinyllysine: lysine 211, lysine 212, and lysine 214. Positions 224 and 227 each coordinate CoA. Lysine 234 bears the N6-acetyllysine; alternate mark. Lysine 234 carries the post-translational modification N6-succinyllysine; alternate. Lysine 240 bears the N6-succinyllysine mark. An N6-acetyllysine modification is found at lysine 241. Serine 251 is a binding site for CoA. 2 positions are modified to N6-acetyllysine: lysine 269 and lysine 270. Lysine 305 carries the post-translational modification N6-acetyllysine; alternate. At lysine 305 the chain carries N6-succinyllysine; alternate. Position 310 is a phosphoserine (serine 310). At lysine 312 the chain carries N6-acetyllysine; alternate. N6-succinyllysine; alternate is present on lysine 312. Serine 333 is modified (phosphoserine). An N6-acetyllysine mark is found at lysine 340 and lysine 375. The Proton donor/acceptor role is filled by cysteine 382.

It belongs to the thiolase-like superfamily. Thiolase family. Homotetramer. Interacts with BNIP3.

The protein localises to the mitochondrion. It catalyses the reaction an acyl-CoA + acetyl-CoA = a 3-oxoacyl-CoA + CoA. It carries out the reaction 2 acetyl-CoA = acetoacetyl-CoA + CoA. The catalysed reaction is acetyl-CoA + H2O = acetate + CoA + H(+). The enzyme catalyses propanoyl-CoA + H2O = propanoate + CoA + H(+). It catalyses the reaction butanoyl-CoA + H2O = butanoate + CoA + H(+). It carries out the reaction hexanoyl-CoA + H2O = hexanoate + CoA + H(+). The catalysed reaction is octanoyl-CoA + H2O = octanoate + CoA + H(+). The enzyme catalyses decanoyl-CoA + H2O = decanoate + CoA + H(+). It catalyses the reaction dodecanoyl-CoA + H2O = dodecanoate + CoA + H(+). It carries out the reaction tetradecanoyl-CoA + H2O = tetradecanoate + CoA + H(+). The catalysed reaction is hexadecanoyl-CoA + H2O = hexadecanoate + CoA + H(+). Its pathway is lipid metabolism; fatty acid beta-oxidation. In terms of biological role, in the production of energy from fats, this is one of the enzymes that catalyzes the last step of the mitochondrial beta-oxidation pathway, an aerobic process breaking down fatty acids into acetyl-CoA. Using free coenzyme A/CoA, catalyzes the thiolytic cleavage of medium- to long-chain unbranched 3-oxoacyl-CoAs into acetyl-CoA and a fatty acyl-CoA shortened by two carbon atoms. Also catalyzes the condensation of two acetyl-CoA molecules into acetoacetyl-CoA and could be involved in the production of ketone bodies. Also displays hydrolase activity on various fatty acyl-CoAs. Thereby, could be responsible for the production of acetate in a side reaction to beta-oxidation. Abolishes BNIP3-mediated apoptosis and mitochondrial damage. The protein is 3-ketoacyl-CoA thiolase, mitochondrial (ACAA2) of Homo sapiens (Human).